The chain runs to 339 residues: Glycerol-3-phosphate dehydrogenase [NAD(P)+] (339 aa).

Residues Ser-15, Tyr-16, His-36, and Lys-110 each coordinate NADPH. Residues Lys-110, Gly-139, and Thr-141 each contribute to the sn-glycerol 3-phosphate site. Ala-143 serves as a coordination point for NADPH. Residues Lys-195, Asp-248, Ser-258, Arg-259, and Asn-260 each contribute to the sn-glycerol 3-phosphate site. The Proton acceptor role is filled by Lys-195. Arg-259 serves as a coordination point for NADPH. NADPH contacts are provided by Val-283 and Glu-285.

Belongs to the NAD-dependent glycerol-3-phosphate dehydrogenase family.

The protein localises to the cytoplasm. It carries out the reaction sn-glycerol 3-phosphate + NAD(+) = dihydroxyacetone phosphate + NADH + H(+). The enzyme catalyses sn-glycerol 3-phosphate + NADP(+) = dihydroxyacetone phosphate + NADPH + H(+). Its pathway is membrane lipid metabolism; glycerophospholipid metabolism. Catalyzes the reduction of the glycolytic intermediate dihydroxyacetone phosphate (DHAP) to sn-glycerol 3-phosphate (G3P), the key precursor for phospholipid synthesis. This is Glycerol-3-phosphate dehydrogenase [NAD(P)+] from Citrobacter koseri (strain ATCC BAA-895 / CDC 4225-83 / SGSC4696).